A 188-amino-acid chain; its full sequence is Adrenodoxin, mitochondrial (188 aa).

A mitochondrion-targeting transit peptide spans Met-1–Arg-64. The residue at position 67 (Ser-67) is a Phosphoserine. One can recognise a 2Fe-2S ferredoxin-type domain in the interval Asp-69 to Val-175. Residue Lys-70 is modified to N6-acetyllysine; alternate. Lys-70 is subject to N6-succinyllysine; alternate. 4 residues coordinate [2Fe-2S] cluster: Cys-110, Cys-116, Cys-119, and Cys-156. The residue at position 162 (Lys-162) is an N6-succinyllysine. Ser-181 carries the post-translational modification Phosphoserine.

The protein belongs to the adrenodoxin/putidaredoxin family. Interacts with CYP11A1. It depends on [2Fe-2S] cluster as a cofactor.

The protein localises to the mitochondrion matrix. Functionally, essential for the synthesis of various steroid hormones, participates in the reduction of mitochondrial cytochrome P450 for steroidogenesis. Transfers electrons from adrenodoxin reductase to CYP11A1, a cytochrome P450 that catalyzes cholesterol side-chain cleavage. Does not form a ternary complex with adrenodoxin reductase and CYP11A1 but shuttles between the two enzymes to transfer electrons. This is Adrenodoxin, mitochondrial (Fdx1) from Mus musculus (Mouse).